The sequence spans 339 residues: Ferredoxin--NADP reductase (339 aa).

Positions 32, 40, 45, 85, 120, 287, and 327 each coordinate FAD.

It belongs to the ferredoxin--NADP reductase type 2 family. Homodimer. It depends on FAD as a cofactor.

The enzyme catalyses 2 reduced [2Fe-2S]-[ferredoxin] + NADP(+) + H(+) = 2 oxidized [2Fe-2S]-[ferredoxin] + NADPH. The chain is Ferredoxin--NADP reductase from Wolbachia sp. subsp. Brugia malayi (strain TRS).